We begin with the raw amino-acid sequence, 896 residues long: MEHAKLTKNLKLKIKNAQLTKAAGLDKLKQKLAQAGSSDTKNSPVSKAQTKEKSSKKTAGTTASAPEIESGATESTARRIRAKDRSSFAAEEPSTTVALPGDASHLTLDALPSADSTEPLSNSSQEKIVEDAVETPNSPQEDGKELQEEVANEQPARNEETPIIRTRTEPKSVVSIKPKFGPTGKHINHLLAKTFKAPAKETKAAAPAEETTQQTRPSVETASTKQQQPSGTNTRPAQSAPAYRRESTNNNNNSKRGPDRDRTKRSDENVKAFTGRDRYGLNEGSSEEDKWRKKRVHKTKKQSEEHVVQCPSHIKIALPITVKDLAAEMKLKASELIQKLFIHGMTYVVNDVLDSQTVVQYIGLEFGCTIEIDSSEKEKLCLVENTVRDEINETNPQKLVIRSPIVAFMGHVDHGKTTLIDALRQSNMAASEAGAITQHMGAFKCSTPVGEITVLDTPGHEAFSAMRARGAEVCDIVVLVVAGDEGIKEQTVEAIEHAKAANITIVVAINKCDKPNFNEETVYRQLAELNLLPEAWGGSIATINTSAKTGEGLQDLLEMLALQAEVLELKADPSARARGLVIESELHKGLGAVATVLVQNGTLHLGEALVFNDCYGKIKTMHNEHNQLLQSASPSTPVLITGLSAIPKAGDPFIVVKNEKVAKEIISARLAGQQRSAALQKKRPNFDAVLQNKKTLKLIIKADVQGSIEALAHSILNIRSEKVDVEILSSGVGDISESDIRLASASKATVIGFHTSVESHAESLIKSLNVKVCLFDIIYHAVDAIKEIMTGLLDPIAEEKNLGAAEIKATFKSSQLGTIYGCLVTEGTMVRNQKVRIIRDKEVLWKCSLSSLKRLKEDVKEVKKGMECGILLDNYQQAQIGDTLQCYEVIYHPQKL.

Residues 32–306 form a disordered region; it reads LAQAGSSDTK…HKTKKQSEEH (275 aa). Polar residues-rich tracts occupy residues 35 to 48 and 114 to 126; these read AGSSDTKNSPVSKA and ADSTEPLSNSSQE. The span at 156–170 shows a compositional bias: basic and acidic residues; sequence ARNEETPIIRTRTEP. The segment covering 213–237 has biased composition (polar residues); it reads QQTRPSVETASTKQQQPSGTNTRPA. Residues 256-280 are compositionally biased toward basic and acidic residues; the sequence is RGPDRDRTKRSDENVKAFTGRDRYG. Residues 401–570 form the tr-type G domain; the sequence is IRSPIVAFMG…ALQAEVLELK (170 aa). The segment at 410-417 is G1; the sequence is GHVDHGKT. A GTP-binding site is contributed by 410–417; sequence GHVDHGKT. A G2 region spans residues 435–439; sequence AITQH. The tract at residues 456–459 is G3; that stretch reads DTPG. GTP contacts are provided by residues 456–460 and 510–513; these read DTPGH and NKCD. Residues 510–513 are G4; it reads NKCD. A G5 region spans residues 546 to 548; it reads SAK.

Belongs to the TRAFAC class translation factor GTPase superfamily. Classic translation factor GTPase family. IF-2 subfamily.

Its subcellular location is the cytoplasm. One of the essential components for the initiation of protein synthesis. Protects formylmethionyl-tRNA from spontaneous hydrolysis and promotes its binding to the 30S ribosomal subunits. Also involved in the hydrolysis of GTP during the formation of the 70S ribosomal complex. The chain is Translation initiation factor IF-2 (infB) from Chlamydia muridarum (strain MoPn / Nigg).